Reading from the N-terminus, the 156-residue chain is MPRKKSINKRDVLPDVFYNSKLVTKTINTIMKDGKKATAQAILYGAFNKVKEITQREPIIVFDEALKNIMPELEVRSRRIGGQKYQIPSEVRPERKQSLGLRWLVQFAQKRNEKTMQQKLAKEIIDAASGNGLAVKKREEIHRMAEANKSFAHYRW.

The protein belongs to the universal ribosomal protein uS7 family. As to quaternary structure, part of the 30S ribosomal subunit. Contacts proteins S9 and S11.

One of the primary rRNA binding proteins, it binds directly to 16S rRNA where it nucleates assembly of the head domain of the 30S subunit. Is located at the subunit interface close to the decoding center, probably blocks exit of the E-site tRNA. In Phytoplasma mali (strain AT), this protein is Small ribosomal subunit protein uS7.